The chain runs to 379 residues: Serpin B5 (379 aa).

N-linked (GlcNAc...) asparagine glycosylation is found at Asn-133, Asn-176, and Asn-361.

It belongs to the serpin family. Ov-serpin subfamily.

The protein resides in the secreted. Its subcellular location is the extracellular space. May not exhibit serine protease inhibitory activity. In Xenopus tropicalis (Western clawed frog), this protein is Serpin B5 (serpinb5).